The sequence spans 176 residues: Large ribosomal subunit protein uL10 (176 aa).

This sequence belongs to the universal ribosomal protein uL10 family. As to quaternary structure, part of the ribosomal stalk of the 50S ribosomal subunit. The N-terminus interacts with L11 and the large rRNA to form the base of the stalk. The C-terminus forms an elongated spine to which L12 dimers bind in a sequential fashion forming a multimeric L10(L12)X complex.

Functionally, forms part of the ribosomal stalk, playing a central role in the interaction of the ribosome with GTP-bound translation factors. This Leuconostoc citreum (strain KM20) protein is Large ribosomal subunit protein uL10.